A 548-amino-acid chain; its full sequence is Tau-cadinol synthase (548 aa).

The Mg(2+) site is built by D303 and D307. 3 residues coordinate substrate: D303, D307, and R443. Residues 303 to 307 (DDTYD) carry the DDXXD motif motif.

The protein belongs to the terpene synthase family. Monomer. It depends on Mg(2+) as a cofactor. Requires Mn(2+) as cofactor. In terms of tissue distribution, constitutively expressed in aerial tissues, but barely observed in roots.

The protein resides in the cytoplasm. It catalyses the reaction (2E,6E)-farnesyl diphosphate + H2O = tau-cadinol + diphosphate. It participates in secondary metabolite biosynthesis; terpenoid biosynthesis. Functionally, sesquiterpene synthase that catalyzes the formation of a blend of sesquiterpenes and sesquiterpenoid alcohols. Converts farnesyl diphosphate to tau-cadinol. The polypeptide is Tau-cadinol synthase (Zea mays (Maize)).